Consider the following 27-residue polypeptide: Peptide Cn29 (27 aa).

3 cysteine pairs are disulfide-bonded: cysteine 2-cysteine 23, cysteine 5-cysteine 18, and cysteine 12-cysteine 25.

In terms of tissue distribution, expressed by the venom gland.

It is found in the secreted. This chain is Peptide Cn29, found in Centruroides noxius (Mexican scorpion).